The primary structure comprises 470 residues: Sulfate adenylyltransferase subunit 1 (470 aa).

The 215-residue stretch at 22–236 folds into the tr-type G domain; sequence KELLRFITCG…YLETIKIDYA (215 aa). Positions 31-38 are G1; sequence GSVDDGKS. 31-38 is a GTP binding site; sequence GSVDDGKS. Residues 89 to 93 are G2; that stretch reads GITID. The G3 stretch occupies residues 110-113; the sequence is DTPG. Residues 110 to 114 and 165 to 168 each bind GTP; these read DTPGH and NKMD. Residues 165 to 168 are G4; sequence NKMD. The tract at residues 202–204 is G5; the sequence is SAL.

Belongs to the TRAFAC class translation factor GTPase superfamily. Classic translation factor GTPase family. CysN/NodQ subfamily. As to quaternary structure, heterodimer composed of CysD, the smaller subunit, and CysN.

The catalysed reaction is sulfate + ATP + H(+) = adenosine 5'-phosphosulfate + diphosphate. It functions in the pathway sulfur metabolism; hydrogen sulfide biosynthesis; sulfite from sulfate: step 1/3. Functionally, with CysD forms the ATP sulfurylase (ATPS) that catalyzes the adenylation of sulfate producing adenosine 5'-phosphosulfate (APS) and diphosphate, the first enzymatic step in sulfur assimilation pathway. APS synthesis involves the formation of a high-energy phosphoric-sulfuric acid anhydride bond driven by GTP hydrolysis by CysN coupled to ATP hydrolysis by CysD. In Francisella tularensis subsp. novicida (strain U112), this protein is Sulfate adenylyltransferase subunit 1.